The primary structure comprises 462 residues: RuvB-like 2 (462 aa).

76-83 (GQPGTGKT) lines the ATP pocket.

Belongs to the RuvB family. Forms homohexameric rings. Can form a dodecamer with ruvbl2 made of two stacked hexameric rings. Is a component of the RNA polymerase II holoenzyme complex. Component of the chromatin-remodeling Ino80 complex. Component of some MLL1/MLL complex.

The protein resides in the nucleus. It is found in the dynein axonemal particle. It carries out the reaction ATP + H2O = ADP + phosphate + H(+). Its function is as follows. Has single-stranded DNA-stimulated ATPase and ATP-dependent DNA helicase (5' to 3') activity suggesting a role in nuclear processes such as recombination and transcription. Proposed core component of the chromatin remodeling INO80 complex which exhibits DNA- and nucleosome-activated ATPase activity and catalyzes ATP-dependent nucleosome sliding. Involved in the endoplasmic reticulum (ER)-associated degradation (ERAD) pathway where it negatively regulates expression of ER stress response genes. In Xenopus laevis (African clawed frog), this protein is RuvB-like 2 (ruvbl2).